The primary structure comprises 105 residues: Nucleoid-associated protein cu1912 (105 aa).

The protein belongs to the YbaB/EbfC family. Homodimer.

The protein localises to the cytoplasm. The protein resides in the nucleoid. Functionally, binds to DNA and alters its conformation. May be involved in regulation of gene expression, nucleoid organization and DNA protection. The protein is Nucleoid-associated protein cu1912 of Corynebacterium urealyticum (strain ATCC 43042 / DSM 7109).